Consider the following 238-residue polypeptide: Sugar fermentation stimulation protein homolog (238 aa).

The protein belongs to the SfsA family.

In Haemophilus influenzae (strain ATCC 51907 / DSM 11121 / KW20 / Rd), this protein is Sugar fermentation stimulation protein homolog.